The primary structure comprises 314 residues: tRNA dimethylallyltransferase (314 aa).

12 to 19 (GPTASGKT) provides a ligand contact to ATP. 14-19 (TASGKT) contacts substrate. Interaction with substrate tRNA regions lie at residues 37 to 40 (DSAL) and 162 to 166 (QRIIR).

This sequence belongs to the IPP transferase family. As to quaternary structure, monomer. Requires Mg(2+) as cofactor.

It carries out the reaction adenosine(37) in tRNA + dimethylallyl diphosphate = N(6)-dimethylallyladenosine(37) in tRNA + diphosphate. Functionally, catalyzes the transfer of a dimethylallyl group onto the adenine at position 37 in tRNAs that read codons beginning with uridine, leading to the formation of N6-(dimethylallyl)adenosine (i(6)A). This Acinetobacter baumannii (strain AB0057) protein is tRNA dimethylallyltransferase.